Here is a 402-residue protein sequence, read N- to C-terminus: LIM/homeobox protein Lhx5 (402 aa).

LIM zinc-binding domains lie at 3–61 (AHCA…RRFG) and 62–125 (TKCA…ASSL). 3 disordered regions span residues 133–187 (VSSC…RTTI), 291–335 (NYDF…GHHP), and 365–392 (SGEV…LPHQ). Positions 151–167 (DESKETDHSTSSDKETA) are enriched in basic and acidic residues. Positions 180-239 (RRGPRTTIKAKQLETLKAAFIATPKPTRHIREQLAQETGLNMRVIQVWFQNRRSKERRMK) form a DNA-binding region, homeobox. The segment covering 300-319 (PSSQTQSPADSSYLQNSGPG) has biased composition (polar residues).

In terms of assembly, interacts with ldb1 and with the N-terminus of rnf12.

It is found in the nucleus. Its function is as follows. Probably involved in the patterning of the nervous system, in particular in the early specification of the diencephalon. This is LIM/homeobox protein Lhx5 (lhx5) from Xenopus laevis (African clawed frog).